A 718-amino-acid chain; its full sequence is Catalase-peroxidase (718 aa).

Positions 98–219 form a cross-link, tryptophyl-tyrosyl-methioninium (Trp-Tyr) (with M-245); it reads WHAAGTYRMG…LAATEMGLIY (122 aa). The Proton acceptor role is filled by His-99. A cross-link (tryptophyl-tyrosyl-methioninium (Tyr-Met) (with W-98)) is located at residues 219–245; it reads YVNPEGPQASGDPRSAAPFIRATFGNM. Heme b is bound at residue His-260.

This sequence belongs to the peroxidase family. Peroxidase/catalase subfamily. In terms of assembly, homodimer or homotetramer. Heme b is required as a cofactor. Formation of the three residue Trp-Tyr-Met cross-link is important for the catalase, but not the peroxidase activity of the enzyme.

It catalyses the reaction H2O2 + AH2 = A + 2 H2O. The catalysed reaction is 2 H2O2 = O2 + 2 H2O. Bifunctional enzyme with both catalase and broad-spectrum peroxidase activity. The polypeptide is Catalase-peroxidase (Acinetobacter baumannii (strain AB307-0294)).